Reading from the N-terminus, the 607-residue chain is Aspartate--tRNA(Asp/Asn) ligase (607 aa).

Position 173 (E173) interacts with L-aspartate. An aspartate region spans residues 197–200; it reads QLFK. R219 serves as a coordination point for L-aspartate. Residues 219-221 and Q228 each bind ATP; that span reads RDE. H456 contacts L-aspartate. An ATP-binding site is contributed by E498. Residue R505 participates in L-aspartate binding. Residue 550–553 coordinates ATP; that stretch reads GLDR.

Belongs to the class-II aminoacyl-tRNA synthetase family. Type 1 subfamily. In terms of assembly, homodimer.

It localises to the cytoplasm. The enzyme catalyses tRNA(Asx) + L-aspartate + ATP = L-aspartyl-tRNA(Asx) + AMP + diphosphate. Its function is as follows. Aspartyl-tRNA synthetase with relaxed tRNA specificity since it is able to aspartylate not only its cognate tRNA(Asp) but also tRNA(Asn). Reaction proceeds in two steps: L-aspartate is first activated by ATP to form Asp-AMP and then transferred to the acceptor end of tRNA(Asp/Asn). This chain is Aspartate--tRNA(Asp/Asn) ligase, found in Magnetococcus marinus (strain ATCC BAA-1437 / JCM 17883 / MC-1).